The following is a 537-amino-acid chain: Copine-1 (537 aa).

C2 domains follow at residues 1 to 114 (MAHC…TLPL) and 123 to 245 (GRGT…ECIH). Ca(2+)-binding residues include Asp-21, Asp-27, Asp-80, Asp-82, Asp-92, Asp-153, and Asp-159. Residue Lys-171 is modified to N6-acetyllysine. Asp-214, Asp-216, and Asp-222 together coordinate Ca(2+). The region spanning 285-505 (NFTVGVDFTG…ALAQTVLAEV (221 aa)) is the VWFA domain.

It belongs to the copine family. Homodimer; homodimerizes via its C2 domains. Interacts with p65/RELA (via N-terminus); this interaction induces proteolytic cleavage of p65/RELA subunit and inhibition of NF-kappa-B transcriptional activity. Interacts (via VWFA domain) with ACTB, CCDC22, MYCBP2, PPP5C, RDX and UBE2O. Ca(2+) is required as a cofactor. As to expression, expressed in liver, spleen, muscle, testis, adrenal (at protein level).

The protein localises to the nucleus. Its subcellular location is the cytoplasm. The protein resides in the cell membrane. In terms of biological role, calcium-dependent phospholipid-binding protein that plays a role in calcium-mediated intracellular processes. Involved in the TNF-alpha receptor signaling pathway in a calcium-dependent manner. Exhibits calcium-dependent phospholipid binding properties. Plays a role in neuronal progenitor cell differentiation; induces neurite outgrowth via a AKT-dependent signaling cascade and calcium-independent manner. May recruit target proteins to the cell membrane in a calcium-dependent manner. May function in membrane trafficking. Involved in TNF-alpha-induced NF-kappa-B transcriptional repression by inducing endoprotease processing of the transcription factor NF-kappa-B p65/RELA subunit. Also induces endoprotease processing of NF-kappa-B p50/NFKB1, p52/NFKB2, RELB and REL. The sequence is that of Copine-1 from Bos taurus (Bovine).